The sequence spans 2592 residues: 6-hydroxymellein synthase cdmE (2592 aa).

Positions 1–11 are enriched in basic and acidic residues; it reads MVLHPSDRRFP. The interval 1–25 is disordered; sequence MVLHPSDRRFPETNGVGGHSKDSSA. In terms of domain architecture, Ketosynthase family 3 (KS3) spans 32–456; that stretch reads LEPLAIVGFA…GTNAHVVLES (425 aa). Catalysis depends on for beta-ketoacyl synthase activity residues Cys-205, His-340, and His-379. The tract at residues 589–910 is malonyl-CoA:ACP transacylase (MAT) domain; the sequence is VFTGQGAQWP…RYSHTITRKK (322 aa). Residues 978–1113 form an N-terminal hotdog fold region; sequence HELLGSPDPD…GFIESKCESD (136 aa). The segment at 978–1291 is dehydratase (DH) domain; that stretch reads HELLGSPDPD…IRGTELCLLS (314 aa). The 319-residue stretch at 978–1296 folds into the PKS/mFAS DH domain; the sequence is HELLGSPDPD…LCLLSAGRGD (319 aa). Positions 1140 to 1296 are C-terminal hotdog fold; that stretch reads TQIGSISAFY…LCLLSAGRGD (157 aa). Ile-1462 and Glu-1484 together coordinate S-adenosyl-L-methionine. A methyltransferase (CMeT) domain region spans residues 1483 to 1591; that stretch reads LEIGTGFGSV…HSLLKPGGKL (109 aa). Positions 1887-2199 are enoyl reductase (ER) domain; it reads GLLVWSDDEA…NDSNMDTAVI (313 aa). Positions 2223-2398 are ketoreductase (KR) domain; it reads ATYVIAGGLG…IPGMSVNLGN (176 aa). In terms of domain architecture, Carrier spans 2509–2586; that stretch reads VAASHVTEAI…GLSEKIARQS (78 aa). Residue Ser-2546 is modified to O-(pantetheine 4'-phosphoryl)serine.

The catalysed reaction is 5 malonyl-CoA + AH2 + 5 H(+) = 6-hydroxymellein + A + 5 CO2 + 5 CoA + H2O. It participates in secondary metabolite biosynthesis; terpenoid biosynthesis. Highly reducing polyketide synthase; part of the gene cluster that mediates the biosynthesis of chrodrimanin B, a meroterpenoid that acts as a potent blocker of insect GABA-gated chloride channels. The first step of the pathway is the biosynthesis of 6-hydroxymellein by the polyketide synthase cdmE. The prenyltransferase cdmH acts as a 6-hydroxymellein 5-farnesyltransferase and produces the hydrophobic metabolite verruculide C. The FAD-dependent monooxygenase cdmI further converts verruculide C into verruculide B. The terpene cyclase cdmG then produced the pentacyclic molecule 3-hydroxypentacecilide A, the backbone structure of chrodrimanin B, via folding the farnesyl moiety of the substrate into the chair-boat conformation. The short-chain dehydrogenase/reductase cdmF functions as the 3-OH dehydrogenase that oxidizes the C-3 hydroxyl group of 3-hydroxypentacecilide A and produces chrodrimanin C, the dehydrogenated product of 3-hydroxypentacecilide A. The cytochrome P450 monooxygenase cdmJ then accepts both 3-hydroxypentacecilide A and chrodrimanin C and functions as a C-7-beta-hydroxylase to produce respectively chrodrimanin H and chrodrimanin F. The dioxygenase cdmA accepts chrodrimanin H to afford chrodrimanin E, which is further transformed to chrodrimanin A by the dioxygenase cdmD. CdmA can also accept chrodrimanin C as substrate to convert it into verruculide A, which is further converted into chrodrimanin T by cdmD. The last step of the biosynthesis is proposed to be performed by the acetyltransferase cdmC which acetylates chrodrimanin A to yield chrodrimanin B. The pathway may also lead to the production of additional shunt products, including chrodrimanins T and U. This chain is 6-hydroxymellein synthase cdmE, found in Talaromyces verruculosus (Penicillium verruculosum).